A 461-amino-acid chain; its full sequence is MFKLKLLSISTIFILAGCVSLAPEYQRPPAPVPQQFSLSKNSLTPAVNSYQDTGWRNFFVDPQVSRLIGEALNNNRDLRMAALKVEEARAQFNVTDADRYPQLNASSGITYNGGLKGDKPTTQEYDAGLELSYELDFFGKLKNMSEADRQNYFASEEARRAVHILLVSNVSQSYFSQQLAYEQLRIARETLKNYEQSYAFVEQQLVTGSTNVLALEQARGQIESTRAEIAKREGDLAQANNALQLVLGTYRAVPSEKGIKGGEIAPVKLPPNLSSQILLQRPDIMEAEYQLKAADANIGAARAAFFPSITLTSGLSSSSTELSSLFTSGSGMWNFIPKIEIPIFNAGRNKANLKLAEIRQQQSVVNYEQKIQSAFKDVSDTLALRDSLSQQLESQQRYLDSLQITLQRARGLYASGAVSYIEVLDAERSLFATQQTILDLTYSRQVNEINLFTALGGGWVE.

The N-terminal stretch at 1–17 is a signal peptide; the sequence is MFKLKLLSISTIFILAG. C18 carries the N-palmitoyl cysteine lipid modification. C18 carries S-diacylglycerol cysteine lipidation.

It belongs to the outer membrane factor (OMF) (TC 1.B.17) family.

The protein resides in the cell outer membrane. Its function is as follows. Component of the sil cation-efflux system that confers resistance to silver. May be part of a three-component cation/proton antiporter. This is Probable outer membrane lipoprotein SilC (silC) from Salmonella typhimurium.